The primary structure comprises 127 residues: Cyclin-dependent kinase 2-associated protein 2 (127 aa).

A disordered region spans residues methionine 1–phenylalanine 49. A compositionally biased stretch (low complexity) spans alanine 9–proline 44. Residues proline 65–isoleucine 107 form an interaction with CDK2 region.

This sequence belongs to the CDK2AP family. Component of the nucleosome remodeling and deacetylase (NuRD) repressor complex, composed of core proteins MTA1, MTA2, MTA3, RBBP4, RBBP7, HDAC1, HDAC2, MBD2, MBD3, and peripherally associated proteins CDK2AP1, CDK2AP2, GATAD2A, GATAD2B, CHD3, CHD4 and CHD5. The exact stoichiometry of the NuRD complex is unknown, and some subunits such as MBD2 and MBD3, GATAD2A and GATAD2B, and CHD3, CHD4 and CHD5 define mutually exclusive NuRD complexes. Interacts with CDK2AP1. Interacts with CDK2. Interacts with MAPK1. Post-translationally, phosphorylated by MAPK1 and CDK2.

Its subcellular location is the cytoplasm. It localises to the nucleus. Functionally, acts as a component of the histone deacetylase NuRD complex which participates in the remodeling of chromatin. Inhibits cell cycle G1/S phase transition by repressing CDK2 expression and activation; represses CDK2 activation by inhibiting its interaction with cyclin E and A. Plays a role in regulating the self-renewal of embryonic stem cells (ESCs) and in maintaining cell survival during terminal differentiation of ESCs. Regulates microtubule organization of metaphase II oocytes. The protein is Cyclin-dependent kinase 2-associated protein 2 (CDK2AP2) of Bos taurus (Bovine).